We begin with the raw amino-acid sequence, 488 residues long: Bifunctional protein HldE (488 aa).

A ribokinase region spans residues 1-331 (MTELSALVER…VALHREDLTL (331 aa)). 206–209 (NRKE) is an ATP binding site. Residue Asp-276 is part of the active site. The interval 358–488 (FTNGCFDLLH…TNTIKKMNGN (131 aa)) is cytidylyltransferase.

The protein in the N-terminal section; belongs to the carbohydrate kinase PfkB family. This sequence in the C-terminal section; belongs to the cytidylyltransferase family. In terms of assembly, homodimer.

The enzyme catalyses D-glycero-beta-D-manno-heptose 7-phosphate + ATP = D-glycero-beta-D-manno-heptose 1,7-bisphosphate + ADP + H(+). It catalyses the reaction D-glycero-beta-D-manno-heptose 1-phosphate + ATP + H(+) = ADP-D-glycero-beta-D-manno-heptose + diphosphate. It functions in the pathway nucleotide-sugar biosynthesis; ADP-L-glycero-beta-D-manno-heptose biosynthesis; ADP-L-glycero-beta-D-manno-heptose from D-glycero-beta-D-manno-heptose 7-phosphate: step 1/4. The protein operates within nucleotide-sugar biosynthesis; ADP-L-glycero-beta-D-manno-heptose biosynthesis; ADP-L-glycero-beta-D-manno-heptose from D-glycero-beta-D-manno-heptose 7-phosphate: step 3/4. In terms of biological role, catalyzes the phosphorylation of D-glycero-D-manno-heptose 7-phosphate at the C-1 position to selectively form D-glycero-beta-D-manno-heptose-1,7-bisphosphate. Functionally, catalyzes the ADP transfer from ATP to D-glycero-beta-D-manno-heptose 1-phosphate, yielding ADP-D-glycero-beta-D-manno-heptose. The polypeptide is Bifunctional protein HldE (Paramagnetospirillum magneticum (strain ATCC 700264 / AMB-1) (Magnetospirillum magneticum)).